Reading from the N-terminus, the 116-residue chain is Tyrosine-protein phosphatase 14 (116 aa).

One can recognise a Tyrosine-protein phosphatase domain in the interval 1-116 (WRMITQEKAQ…SLKNPGPVIV (116 aa)). Residue Asp-84 coordinates substrate.

It belongs to the protein-tyrosine phosphatase family.

It catalyses the reaction O-phospho-L-tyrosyl-[protein] + H2O = L-tyrosyl-[protein] + phosphate. In Styela plicata (Wrinkled sea squirt), this protein is Tyrosine-protein phosphatase 14 (STY-14).